A 227-amino-acid chain; its full sequence is RNA-free ribonuclease P (227 aa).

Belongs to the HARP family.

It catalyses the reaction Endonucleolytic cleavage of RNA, removing 5'-extranucleotides from tRNA precursor.. RNA-free RNase P that catalyzes the removal of the 5'-leader sequence from pre-tRNA to produce the mature 5'-terminus. The chain is RNA-free ribonuclease P from Archaeoglobus fulgidus (strain ATCC 49558 / DSM 4304 / JCM 9628 / NBRC 100126 / VC-16).